We begin with the raw amino-acid sequence, 123 residues long: MKLLLLALPMLVLLPQVIPAYSGEKKCWNRSGHCRKQCKDGEAVKDTCKNLRACCVPSNEDHRQVPTTSPTPLSDSTPGSIDDILTVRFTTDYFEVSSKKDMVEESEAGWGTQTSLPDVHHSS.

The signal sequence occupies residues 1-19; sequence MKLLLLALPMLVLLPQVIP. Disulfide bonds link cysteine 27–cysteine 54, cysteine 34–cysteine 48, and cysteine 38–cysteine 55. Disordered stretches follow at residues 59 to 79 and 102 to 123; these read NEDH…STPG and MVEE…HHSS. The propeptide occupies 64–123; that stretch reads QVPTTSPTPLSDSTPGSIDDILTVRFTTDYFEVSSKKDMVEESEAGWGTQTSLPDVHHSS. Over residues 66 to 79 the composition is skewed to low complexity; sequence PTTSPTPLSDSTPG.

This sequence belongs to the beta-defensin family. Post-translationally, the three-dimensional structure formed by the three intramolecular disulfide bridges is indispensable for antimicrobial activity.

The protein localises to the secreted. Its function is as follows. Host defense peptide that exhibits antimicrobial activity against both Gram-negative bacteria, such as E.coli and S.typhimurium, and Gram-positive bacteria, such as S.aureus and B.subtilis. Inhibits cell adhesion of E.coli on intestinal epithelial enterocytes. Causes rapid permeabilization of both the outer and inner membrane of E.coli, leading to morphological alterations on the bacterial surface. Binds to bacterial lipopolysaccharides (LPS) with high affinity, and may thereby be involved in immunoregulation through LPS neutralization. May contribute to epididymal innate immunity and protect the sperm against attack by microorganisms. The chain is Defensin beta 118 (DEFB118) from Hylobates lar (Lar gibbon).